The sequence spans 498 residues: MDTLLRTPNNLEFLHGFGVKVSAFSSVKSQKFGAKKFCEGLGSRSVCVKASSSALLELVPETKKENLDFELPMYDPSKGVVVDLAVVGGGPAGLAVAQQVSEAGLSVCSIDPNPKLIWPNNYGVWVDEFEAMDLLDCLDATWSGATVYIDDNTTKDLNRPYGRVNRKQLKSKMMQKCILNGVKFHQAKVIKVIHEESKSMLICNDGITIQATVVLDATGFSRSLVQYDKPYNPGYQVAYGILAEVEEHPFDVNKMVFMDWRDSHLKNNVELKERNSRIPTFLYAMPFSSNRIFLEETSLVARPGLGMDDIQERMVARLSHLGIKVKSIEEDEHCVIPMGGPLPVLPQRVVGIGGTAGMVHPSTGYMVARTLAAAPVVANAIIQYLSSERSHSGDELSAAVWKDLWPIERRRQREFFCFGMDILLKLDLPATRRFFDAFFDLEPRYWHGFLSSRLFLPELIVFGLSLFSHASNTSRLEIMTKGTLPLVHMINNLLQDKE.

A chloroplast and chromoplast-targeting transit peptide spans 1–79 (MDTLLRTPNN…ELPMYDPSKG (79 aa)). Residue 84–112 (LAVVGGGPAGLAVAQQVSEAGLSVCSIDP) coordinates NAD(+). The FLEET motif motif lies at 293–297 (FLEET).

It belongs to the lycopene cyclase family. As to quaternary structure, monomer. The cofactor is FAD. NADPH serves as cofactor.

It localises to the plastid. Its subcellular location is the chloroplast. The protein resides in the chromoplast. The enzyme catalyses a carotenoid psi-end group = a carotenoid beta-end derivative. It catalyses the reaction all-trans-lycopene = gamma-carotene. The catalysed reaction is gamma-carotene = all-trans-beta-carotene. It carries out the reaction all-trans-neurosporene = beta-zeacarotene. The enzyme catalyses beta-zeacarotene = 7,8-dihydro-beta-carotene. Its pathway is carotenoid biosynthesis; beta-carotene biosynthesis. It functions in the pathway carotenoid biosynthesis; beta-zeacarotene biosynthesis. Its function is as follows. Catalyzes the double cyclization reaction which converts lycopene to beta-carotene. Catalyzes the double cyclization reaction which converts neurosporene to 7,8-dihydro-beta-carotene. The protein is Lycopene beta cyclase, chloroplastic/chromoplastic of Capsicum annuum (Capsicum pepper).